Here is a 230-residue protein sequence, read N- to C-terminus: MNRLNIAVSCLATALLFGCEALHPPAPGDNPDYAPTYPVTPDPKELRKVSGAIYSSETALPLFETPRARHPGDILTVYLIEKTDAQKNATTTQRKNDTTKITNKLFLGRPISLGSGYSMDFDLDNQRQFNGEGRSIQNNKLAGSISVTVAKVLANGNMVVQGEKWVRINQGNEFVRLSGIVRPQDIKADNTITSDRIANARISYGGTGQINNTNAQGWLSRILWGPLFPT.

Positions 1 to 18 (MNRLNIAVSCLATALLFG) are cleaved as a signal peptide. The N-palmitoyl cysteine moiety is linked to residue C19. C19 is lipidated: S-diacylglycerol cysteine.

The protein belongs to the FlgH family. As to quaternary structure, the basal body constitutes a major portion of the flagellar organelle and consists of four rings (L,P,S, and M) mounted on a central rod.

The protein localises to the cell outer membrane. It localises to the bacterial flagellum basal body. Functionally, assembles around the rod to form the L-ring and probably protects the motor/basal body from shearing forces during rotation. The sequence is that of Flagellar L-ring protein from Legionella pneumophila (strain Corby).